The sequence spans 237 residues: GATA zinc finger domain-containing protein 18 (237 aa).

2 stretches are compositionally biased toward low complexity: residues 1-28 and 87-118; these read MAHNNNNNINNNNNNNNNNNNNNNKNNN and NTSTNTTTTTTTTTTTTTTSSPNNNVITPNSN. Disordered stretches follow at residues 1–31, 78–119, and 140–186; these read MAHNNNNNINNNNNNNNNNNNNNNKNNNSEY, PTNT…NSNL, and FEEG…GGCS. The span at 140–151 shows a compositional bias: acidic residues; it reads FEEGDDEEETSS. Residues 152-167 are compositionally biased toward low complexity; sequence DSDSSSSSSTSSSSSE. The GATA-type zinc finger occupies 185 to 212; that stretch reads CSICKTQETPYWRKGKDGDKTVYLCNAC.

The sequence is that of GATA zinc finger domain-containing protein 18 (gtaR) from Dictyostelium discoideum (Social amoeba).